The primary structure comprises 359 residues: NAC domain-containing protein 45 (359 aa).

Residues 19–185 (LPPGFRFHPT…EWVVCKVFHK (167 aa)) enclose the NAC domain. A DNA-binding region spans residues 130 to 191 (VGMKKTLVFY…VFHKKGDDRE (62 aa)).

Expressed in roots. Expressed at low levels in leaves, stems and panicles.

It is found in the nucleus. Transcription activator involved in responses to drought stress and salt stress. Transactivates the stress response genes LEA19 and PM19L. This is NAC domain-containing protein 45 from Oryza sativa subsp. japonica (Rice).